Reading from the N-terminus, the 76-residue chain is uncharacterized protein (76 aa).

This is an uncharacterized protein from Human cytomegalovirus (strain AD169) (HHV-5).